We begin with the raw amino-acid sequence, 151 residues long: 3-dehydroquinate dehydratase (151 aa).

Residue Y24 is the Proton acceptor of the active site. Positions 76, 82, and 89 each coordinate substrate. H102 functions as the Proton donor in the catalytic mechanism. Residues 103–104 and R113 each bind substrate; that span reads VS.

It belongs to the type-II 3-dehydroquinase family. Homododecamer.

The catalysed reaction is 3-dehydroquinate = 3-dehydroshikimate + H2O. The protein operates within metabolic intermediate biosynthesis; chorismate biosynthesis; chorismate from D-erythrose 4-phosphate and phosphoenolpyruvate: step 3/7. Catalyzes a trans-dehydration via an enolate intermediate. The protein is 3-dehydroquinate dehydratase of Rhodopseudomonas palustris (strain TIE-1).